Here is a 103-residue protein sequence, read N- to C-terminus: Small ribosomal subunit protein uS10 (103 aa).

Belongs to the universal ribosomal protein uS10 family. As to quaternary structure, part of the 30S ribosomal subunit.

Functionally, involved in the binding of tRNA to the ribosomes. The polypeptide is Small ribosomal subunit protein uS10 (Neisseria gonorrhoeae).